Consider the following 101-residue polypeptide: Iron-sulfur cluster assembly protein CyaY (101 aa).

Belongs to the frataxin family.

Functionally, involved in iron-sulfur (Fe-S) cluster assembly. May act as a regulator of Fe-S biogenesis. This chain is Iron-sulfur cluster assembly protein CyaY, found in Actinobacillus pleuropneumoniae serotype 5b (strain L20).